A 138-amino-acid chain; its full sequence is Small ribosomal subunit protein bS16 (138 aa).

The disordered stretch occupies residues 92-138 (QAAKREADAKQAAKEAAEAKAAAEAEAKAAAEAESADAGAEEAPAEA). Residues 94–122 (AKREADAKQAAKEAAEAKAAAEAEAKAAA) are compositionally biased toward basic and acidic residues.

This sequence belongs to the bacterial ribosomal protein bS16 family.

The sequence is that of Small ribosomal subunit protein bS16 from Synechococcus sp. (strain WH7803).